The primary structure comprises 378 residues: Dihydroorotate dehydrogenase (quinone) (378 aa).

FMN contacts are provided by residues 79-83 and Thr103; that span reads PGYDK. Lys83 is a substrate binding site. 128-132 contributes to the substrate binding site; that stretch reads NRMGF. FMN-binding residues include Asn160 and Asn193. Asn193 lines the substrate pocket. Ser196 functions as the Nucleophile in the catalytic mechanism. Asn198 lines the substrate pocket. Residues Lys231 and Thr259 each coordinate FMN. Residue 260 to 261 participates in substrate binding; it reads NT. Residues Gly289, Gly318, and 339–340 each bind FMN; that span reads YT.

Belongs to the dihydroorotate dehydrogenase family. Type 2 subfamily. Monomer. FMN serves as cofactor.

The protein resides in the cell membrane. The catalysed reaction is (S)-dihydroorotate + a quinone = orotate + a quinol. Its pathway is pyrimidine metabolism; UMP biosynthesis via de novo pathway; orotate from (S)-dihydroorotate (quinone route): step 1/1. Its function is as follows. Catalyzes the conversion of dihydroorotate to orotate with quinone as electron acceptor. The chain is Dihydroorotate dehydrogenase (quinone) from Trichodesmium erythraeum (strain IMS101).